Here is a 364-residue protein sequence, read N- to C-terminus: Transposase for insertion sequence element IS1111A (364 aa).

It belongs to the transposase IS1111A/IS1328/IS1533 family.

Functionally, required for the transposition of the insertion element. The polypeptide is Transposase for insertion sequence element IS1111A (Coxiella burnetii (strain RSA 493 / Nine Mile phase I)).